Reading from the N-terminus, the 174-residue chain is Large ribosomal subunit protein uL10 (174 aa).

It belongs to the universal ribosomal protein uL10 family. Part of the ribosomal stalk of the 50S ribosomal subunit. The N-terminus interacts with L11 and the large rRNA to form the base of the stalk. The C-terminus forms an elongated spine to which L12 dimers bind in a sequential fashion forming a multimeric L10(L12)X complex.

Functionally, forms part of the ribosomal stalk, playing a central role in the interaction of the ribosome with GTP-bound translation factors. This chain is Large ribosomal subunit protein uL10, found in Bordetella bronchiseptica (strain ATCC BAA-588 / NCTC 13252 / RB50) (Alcaligenes bronchisepticus).